Consider the following 611-residue polypeptide: TANK-binding kinase 1-binding protein 1 (611 aa).

The segment at 1 to 280 is homodimerization; that stretch reads MESMFEDDIS…QDLASNQSEC (280 aa). A coiled-coil region spans residues 48-162; it reads YGDIKERLGG…ALVETHLRQI (115 aa). At Ser-184 the chain carries Phosphoserine. Residues 218–277 are a coiled coil; sequence TSVSVSELERRRLEEALEAAQGEARGAQLREEQLQAECERLQGELKQLQETRAQDLASNQ. The interval 281–330 is interaction with TBK1 and IKBKE; it reads DMAWVKRVGDDQVNLALAYTELTEELGRLRELSSLQGRILRTLLQEQARN. Residues 328–437 are disordered; sequence ARNAGQRHSP…PPPPPGERTL (110 aa). The segment covering 346–361 has biased composition (pro residues); the sequence is PACPSPSPPARPPPCA. Residues 362 to 372 are compositionally biased toward low complexity; it reads PCQSPAAQRRS. A phosphoserine mark is found at Ser-365, Ser-372, Ser-379, Ser-385, Ser-400, and Ser-415. Residues 389 to 406 are compositionally biased toward pro residues; that stretch reads PSCPSPVPQRRSPVPPSC. Residues 416–433 show a composition bias toward pro residues; it reads PVPPSCPAPQPRPPPPPG. Phosphoserine occurs at positions 500 and 530. The UBZ1-type zinc-finger motif lies at 579-605; it reads IRSCPLCQLGFPVGYPDDALIKHIDSH. Residues Cys-582, Cys-585, His-601, and His-605 each coordinate Zn(2+).

In terms of assembly, homodimer. May form a heterodimer with NAP1. Interacts with TKB1 and IKBKE. Weakly interacts with DDX3X.

In terms of biological role, adapter protein which constitutively binds TBK1 and IKBKE playing a role in antiviral innate immunity. Essential for the efficient induction of IRF-dependent transcription following infection with Sendai virus. The protein is TANK-binding kinase 1-binding protein 1 of Mus musculus (Mouse).